A 1020-amino-acid chain; its full sequence is Sodium/potassium-transporting ATPase subunit alpha-2 (1020 aa).

Residues 1–5 constitute a propeptide that is removed on maturation; that stretch reads MGRGA. A disordered region spans residues 1–31; the sequence is MGRGAGREYSPAATTAENGGGKKKQKEKELD. At 6–85 the chain is on the cytoplasmic side; the sequence is GREYSPAATT…NALTPPPTTP (80 aa). The residue at position 10 (Ser10) is a Phosphoserine. The segment at 80–82 is interaction with phosphoinositide-3 kinase; sequence PPP. The chain crosses the membrane as a helical span at residues 86-106; it reads EWVKFCRQLFGGFSILLWIGA. The Extracellular portion of the chain corresponds to 107–129; the sequence is LLCFLAYGILAAMEDEPSNDNLY. A helical transmembrane segment spans residues 130 to 150; the sequence is LGIVLAAVVIVTGCFSYYQEA. At 151–286 the chain is on the cytoplasmic side; the sequence is KSSKIMDSFK…VGQTPIAMEI (136 aa). Positions 212 to 227 are enriched in polar residues; that stretch reads DNSSLTGESEPQTRSP. A disordered region spans residues 212-231; it reads DNSSLTGESEPQTRSPEFTH. The helical transmembrane segment at 287–306 threads the bilayer; that stretch reads EHFIQLITGVAVFLGVSFFV. Residues 307–318 lie on the Extracellular side of the membrane; the sequence is LSLILGYSWLEA. A helical transmembrane segment spans residues 319–336; it reads VIFLIGIIVANVPEGLLA. At 337-769 the chain is on the cytoplasmic side; that stretch reads TVTVCLTLTA…EEGRLIFDNL (433 aa). The active-site 4-aspartylphosphate intermediate is the Asp374. A phosphoserine mark is found at Ser439, Ser450, Ser496, and Ser559. Thr570 is modified (phosphothreonine). Ser587 and Ser672 each carry phosphoserine. Positions 714 and 718 each coordinate Mg(2+). A helical transmembrane segment spans residues 770–789; it reads KKSIAYTLTSNIPEITPFLL. The Extracellular segment spans residues 790–799; the sequence is FIIANIPLPL. A helical membrane pass occupies residues 800–820; the sequence is GTVTILCIDLGTDMVPAISLA. At 821-840 the chain is on the cytoplasmic side; it reads YEAAESDIMKRQPRNSQTDK. Ser826 is subject to Phosphoserine. The chain crosses the membrane as a helical span at residues 841–863; it reads LVNERLISMAYGQIGMIQALGGF. Residues 864-915 are Extracellular-facing; the sequence is FTYFVILAENGFLPSRLLGIRLDWDDRTTNDLEDSYGQEWTYEQRKVVEFTC. Residues 916–935 traverse the membrane as a helical segment; the sequence is HTAFFASIVVVQWADLIICK. The Cytoplasmic segment spans residues 936–948; the sequence is TRRNSVFQQGMKN. Ser940 bears the Phosphoserine; by PKA mark. The helical transmembrane segment at 949–967 threads the bilayer; sequence KILIFGLLEETALAAFLSY. At 968–982 the chain is on the extracellular side; that stretch reads CPGMGVALRMYPLKV. The chain crosses the membrane as a helical span at residues 983–1003; the sequence is TWWFCAFPYSLLIFIYDEVRK. At 1004 to 1020 the chain is on the cytoplasmic side; it reads LILRRYPGGWVEKETYY.

This sequence belongs to the cation transport ATPase (P-type) (TC 3.A.3) family. Type IIC subfamily. In terms of assembly, the sodium/potassium-transporting ATPase is composed of a catalytic alpha subunit, an auxiliary non-catalytic beta subunit and an additional regulatory subunit. Interacts with regulatory subunit FXYD1.

Its subcellular location is the membrane. The protein resides in the cell membrane. The enzyme catalyses K(+)(out) + Na(+)(in) + ATP + H2O = K(+)(in) + Na(+)(out) + ADP + phosphate + H(+). Functionally, this is the catalytic component of the active enzyme, which catalyzes the hydrolysis of ATP coupled with the exchange of sodium and potassium ions across the plasma membrane. This action creates the electrochemical gradient of sodium and potassium ions, providing the energy for active transport of various nutrients. The polypeptide is Sodium/potassium-transporting ATPase subunit alpha-2 (Atp1a2) (Mus musculus (Mouse)).